Reading from the N-terminus, the 110-residue chain is Large ribosomal subunit protein uL24 (110 aa).

The protein belongs to the universal ribosomal protein uL24 family. In terms of assembly, part of the 50S ribosomal subunit.

Functionally, one of two assembly initiator proteins, it binds directly to the 5'-end of the 23S rRNA, where it nucleates assembly of the 50S subunit. Its function is as follows. One of the proteins that surrounds the polypeptide exit tunnel on the outside of the subunit. The sequence is that of Large ribosomal subunit protein uL24 from Thermus thermophilus (strain ATCC BAA-163 / DSM 7039 / HB27).